The primary structure comprises 436 residues: tRNA(Ile)-lysidine synthase (436 aa).

21–26 (SGGVDS) provides a ligand contact to ATP.

Belongs to the tRNA(Ile)-lysidine synthase family.

It localises to the cytoplasm. It carries out the reaction cytidine(34) in tRNA(Ile2) + L-lysine + ATP = lysidine(34) in tRNA(Ile2) + AMP + diphosphate + H(+). Functionally, ligates lysine onto the cytidine present at position 34 of the AUA codon-specific tRNA(Ile) that contains the anticodon CAU, in an ATP-dependent manner. Cytidine is converted to lysidine, thus changing the amino acid specificity of the tRNA from methionine to isoleucine. This Aster yellows witches'-broom phytoplasma (strain AYWB) protein is tRNA(Ile)-lysidine synthase.